Reading from the N-terminus, the 463-residue chain is Type IV secretion system protein PtlD (463 aa).

An N-terminal signal peptide occupies residues Met1–Ala24. The next 5 helical transmembrane spans lie at Leu118–Leu138, Trp232–Ser252, Leu253–Val273, Ala294–Gly314, and Met333–Ala353. Residues Ala376 to Pro410 show a composition bias toward low complexity. The interval Ala376 to Pro463 is disordered. The segment covering Ala411–Ser420 has biased composition (pro residues). The segment covering Val441–Val455 has biased composition (basic and acidic residues).

The protein resides in the cell membrane. In terms of biological role, component of the type IV secretion system ptl required for secretion of assembled pertussis toxin (PTX) through the outer membrane. The protein is Type IV secretion system protein PtlD (ptlD) of Bordetella pertussis (strain Tohama I / ATCC BAA-589 / NCTC 13251).